Reading from the N-terminus, the 381-residue chain is Meiotic recombination protein SPO11-1 (381 aa).

Residues 23-162 (EEAATLLHRI…LNVVPVAKGL (140 aa)) form the Topo IIA-type catalytic domain. Residue Y123 is the O-(5'-phospho-DNA)-tyrosine intermediate of the active site. The Mg(2+) site is built by E209 and D261.

This sequence belongs to the TOP6A family. Mg(2+) is required as a cofactor. Highly expressed in flowers before pollination. Expressed in roots and shoots.

It localises to the nucleus. It carries out the reaction ATP-dependent breakage, passage and rejoining of double-stranded DNA.. Required for meiotic recombination. Mediates DNA cleavage that forms the double-strand breaks (DSB) that initiate meiotic recombination. May be involved in plant growth and development, and stress tolerance. The chain is Meiotic recombination protein SPO11-1 (SPO11-1) from Oryza sativa subsp. indica (Rice).